A 409-amino-acid polypeptide reads, in one-letter code: DNA primase DnaG (409 aa).

The region spanning 175 to 261 (DAIIVVEGRA…EVEELTRKEI (87 aa)) is the Toprim domain. Residues glutamate 181, aspartate 223, and aspartate 225 each coordinate Mg(2+). The span at 280–289 (ERPKDKEREK) shows a compositional bias: basic and acidic residues. Residues 280 to 322 (ERPKDKEREKGKKPKPKKRPERRGRPRKKKARPKRGPQERRLL) form a disordered region. A compositionally biased stretch (basic residues) spans 290–314 (GKKPKPKKRPERRGRPRKKKARPKR).

Belongs to the archaeal DnaG primase family. As to quaternary structure, forms a ternary complex with MCM helicase and DNA. Component of the archaeal exosome complex. Mg(2+) is required as a cofactor.

It carries out the reaction ssDNA + n NTP = ssDNA/pppN(pN)n-1 hybrid + (n-1) diphosphate.. RNA polymerase that catalyzes the synthesis of short RNA molecules used as primers for DNA polymerase during DNA replication. Also part of the exosome, which is a complex involved in RNA degradation. Acts as a poly(A)-binding protein that enhances the interaction between heteromeric, adenine-rich transcripts and the exosome. The chain is DNA primase DnaG from Methanopyrus kandleri (strain AV19 / DSM 6324 / JCM 9639 / NBRC 100938).